The sequence spans 92 residues: Transcription factor PRE1 (92 aa).

One can recognise a bHLH domain in the interval 4 to 59 (RRSRQSSSAPRISDNQMIDLVSKLRQILPEIGQRRRSDKASASKVLQETCNYIRNL).

As to quaternary structure, interacts with IBH1 and HFR1. In terms of tissue distribution, expressed in roots, leaves, stems and flowers.

It localises to the nucleus. Atypical and probable non DNA-binding bHLH transcription factor that integrates multiple signaling pathways to regulate cell elongation and plant development. Binds IBH1, forming a pair of antagonistic bHLH transcription factors that function downstream of BZR1 to mediate brassinosteroid regulation of cell elongation. Regulates light responses by binding and inhibiting the activity of the bHLH transcription factor HFR1, a critical regulator of light signaling and shade avoidance. May have a regulatory role in various aspects of gibberellin-dependent growth and development. The protein is Transcription factor PRE1 (PRE1) of Arabidopsis thaliana (Mouse-ear cress).